The following is a 437-amino-acid chain: Mannan endo-1,4-beta-mannosidase A (437 aa).

The first 19 residues, 1 to 19, serve as a signal peptide directing secretion; it reads MMMLSKSLLSAATAASALA. A propeptide spanning residues 20 to 27 is cleaved from the precursor; that stretch reads AVLQPVPR. A catalytic region spans residues 28 to 376; it reads ASSFVTISGT…VDAINGGTTT (349 aa). Cys53 and Cys56 are disulfide-bonded. N-linked (GlcNAc...) asparagine glycosylation is found at Asn157 and Asn184. The active-site Proton donor/acceptor is the Glu196. 196 to 198 lines the substrate pocket; sequence EPR. Residues Cys199 and Cys202 are joined by a disulfide bond. Residues Glu232 and Trp274 each coordinate substrate. Asn277 is a glycosylation site (N-linked (GlcNAc...) asparagine). Cysteines 292 and 299 form a disulfide. Residue Glu303 is the Nucleophile of the active site. Cys311 and Cys361 are oxidised to a cystine. Asn355 is a glycosylation site (N-linked (GlcNAc...) asparagine). A disordered region spans residues 372–399; sequence GGTTTPPPVSSTTTTSSRTSSTPPPPGG. The tract at residues 377 to 399 is linker; that stretch reads PPPVSSTTTTSSRTSSTPPPPGG. A compositionally biased stretch (low complexity) spans 381–392; it reads SSTTTTSSRTSS. A CBM1 domain is found at 400-435; sequence SCSPLYGQCGGSGYTGPTCCAQGTCIYSNYWYSQCL.

Belongs to the glycosyl hydrolase 5 (cellulase A) family. Monomer.

The protein resides in the secreted. The enzyme catalyses Random hydrolysis of (1-&gt;4)-beta-D-mannosidic linkages in mannans, galactomannans and glucomannans.. Functionally, endo-1,4-mannanase that catalyzes the random hydrolysis of (1-&gt;4)-beta-D-mannosidic linkages in mannans and heteromannans. It is a crucial enzyme for depolymerization of seed galactomannans and wood galactoglucomannans. Active against locust bean gum and ivory nut mannan, releasing mainly tri- and disaccharides. Also has transglycosylation activity. Transglycosylation of two mannotrioses into a mannohexaose is the major transglycosylation route. The chain is Mannan endo-1,4-beta-mannosidase A from Hypocrea jecorina (strain ATCC 56765 / BCRC 32924 / NRRL 11460 / Rut C-30) (Trichoderma reesei).